The chain runs to 547 residues: Glucose-6-phosphate isomerase (547 aa).

Glu352 functions as the Proton donor in the catalytic mechanism. Catalysis depends on residues His383 and Lys511.

It belongs to the GPI family.

The protein localises to the cytoplasm. It carries out the reaction alpha-D-glucose 6-phosphate = beta-D-fructose 6-phosphate. It functions in the pathway carbohydrate biosynthesis; gluconeogenesis. It participates in carbohydrate degradation; glycolysis; D-glyceraldehyde 3-phosphate and glycerone phosphate from D-glucose: step 2/4. Its function is as follows. Catalyzes the reversible isomerization of glucose-6-phosphate to fructose-6-phosphate. The protein is Glucose-6-phosphate isomerase of Rhodospirillum rubrum (strain ATCC 11170 / ATH 1.1.1 / DSM 467 / LMG 4362 / NCIMB 8255 / S1).